A 231-amino-acid chain; its full sequence is MSVTLALPSKGRLKEQTLAVLDKAGYKVILPDDSRNYRARVEGETDLDILFLSASEIARELGYGSVDLGVTGEDLVRETLAHSEERVAIEAELGFGHADVVVAVPEVWRDVTSMADLDDVAADFRQRHGRRLRIATKYWRLTQQFFSQKHGIQVYRIVESLGATEGAPAAGSADMIVDITSTGSTLRANRLKVLEDGVILRSQACLVSARRARENARVTEVATRIRKGLGG.

This sequence belongs to the ATP phosphoribosyltransferase family. Short subfamily. Heteromultimer composed of HisG and HisZ subunits.

The protein resides in the cytoplasm. The catalysed reaction is 1-(5-phospho-beta-D-ribosyl)-ATP + diphosphate = 5-phospho-alpha-D-ribose 1-diphosphate + ATP. It functions in the pathway amino-acid biosynthesis; L-histidine biosynthesis; L-histidine from 5-phospho-alpha-D-ribose 1-diphosphate: step 1/9. Functionally, catalyzes the condensation of ATP and 5-phosphoribose 1-diphosphate to form N'-(5'-phosphoribosyl)-ATP (PR-ATP). Has a crucial role in the pathway because the rate of histidine biosynthesis seems to be controlled primarily by regulation of HisG enzymatic activity. The polypeptide is ATP phosphoribosyltransferase (Brucella anthropi (strain ATCC 49188 / DSM 6882 / CCUG 24695 / JCM 21032 / LMG 3331 / NBRC 15819 / NCTC 12168 / Alc 37) (Ochrobactrum anthropi)).